The chain runs to 321 residues: Sphingolipid delta(4)-desaturase DES1 (321 aa).

The next 6 membrane-spanning stretches (helical) occupy residues 41 to 61 (PNFKWVAGAMVLTQILALFVV), 68 to 88 (WLIVAAYCFGGIINHSLMLAV), 107 to 127 (ILGFICNLPIGLPMSISFKKY), 157 to 177 (FGKFLWVCLQPFFYIFRPLII), 187 to 206 (IINTVVQLTFNALIVYFLGW), and 208 to 230 (PLAYLLIGSILAMGLHPVAGHFI).

This sequence belongs to the fatty acid desaturase type 1 family. DEGS subfamily. In terms of tissue distribution, testes.

It localises to the endoplasmic reticulum membrane. The protein localises to the membrane. The protein resides in the mitochondrion. It carries out the reaction an N-acylsphinganine + 2 Fe(II)-[cytochrome b5] + O2 + 2 H(+) = an N-acylsphing-4-enine + 2 Fe(III)-[cytochrome b5] + 2 H2O. It catalyses the reaction an N-acyleicosasphinganine + 2 Fe(II)-[cytochrome b5] + O2 + 2 H(+) = an N-acyleicosasphing-4-enine + 2 Fe(III)-[cytochrome b5] + 2 H2O. It functions in the pathway sphingolipid metabolism. Its function is as follows. Has sphingolipid-delta-4-desaturase activity. Converts sphinganine-containing sphingolipids (such as N-acylsphinganines or dihydroceramides) into sphingolipids containing the delta-4-desaturated sphingoid base (E)-sphing-4-enine (such as N-acylsphing-4-enines or ceramides), which are required for many different functions (structural functions as well as signaling). Required to initiate spermatid differentiation among other signals. Required for central spindle assembly and cytokinesis during male meiosis, may act as part of an anchoring mechanism that links membrane-bounded cellular compartments to components of the cytoskeleton. This is Sphingolipid delta(4)-desaturase DES1 from Drosophila melanogaster (Fruit fly).